Here is a 75-residue protein sequence, read N- to C-terminus: Large ribosomal subunit protein bL28 (75 aa).

This sequence belongs to the bacterial ribosomal protein bL28 family.

This is Large ribosomal subunit protein bL28 from Buchnera aphidicola subsp. Acyrthosiphon pisum (strain APS) (Acyrthosiphon pisum symbiotic bacterium).